The chain runs to 98 residues: MLEKIYSVLGTGSCLVKDGEIIESYLLSDEEVKLIEKIAKVIPFLPEKFKVGFFEHEGGRIIAIKHGEVFICFPARSDNVMSELRKVEVEVYDKILSP.

This is an uncharacterized protein from Archaeoglobus fulgidus (strain ATCC 49558 / DSM 4304 / JCM 9628 / NBRC 100126 / VC-16).